Here is a 211-residue protein sequence, read N- to C-terminus: Probable nicotinate-nucleotide adenylyltransferase (211 aa).

This sequence belongs to the NadD family.

The enzyme catalyses nicotinate beta-D-ribonucleotide + ATP + H(+) = deamido-NAD(+) + diphosphate. Its pathway is cofactor biosynthesis; NAD(+) biosynthesis; deamido-NAD(+) from nicotinate D-ribonucleotide: step 1/1. Functionally, catalyzes the reversible adenylation of nicotinate mononucleotide (NaMN) to nicotinic acid adenine dinucleotide (NaAD). The chain is Probable nicotinate-nucleotide adenylyltransferase from Legionella pneumophila (strain Lens).